A 224-amino-acid chain; its full sequence is UPF0758 protein Lm4b_01560 (224 aa).

Positions 102 to 224 (VVRCPEDAVK…YISLKEKGYF (123 aa)) constitute an MPN domain. Positions 173, 175, and 186 each coordinate Zn(2+). A JAMM motif motif is present at residues 173-186 (HNHPSGDPTPSSED).

Belongs to the UPF0758 family.

The sequence is that of UPF0758 protein Lm4b_01560 from Listeria monocytogenes serotype 4b (strain CLIP80459).